The following is a 467-amino-acid chain: Transcription factor bHLH3 (467 aa).

The region spanning 316–365 is the bHLH domain; that stretch reads EEALNHVEAERQRREKLNQRFYALRAVVPNISKMDKASLLADAITYITDM.

In terms of assembly, homodimer.

It is found in the nucleus. This Arabidopsis thaliana (Mouse-ear cress) protein is Transcription factor bHLH3 (BHLH3).